The primary structure comprises 122 residues: ATP synthase epsilon chain (122 aa).

Belongs to the ATPase epsilon chain family. As to quaternary structure, F-type ATPases have 2 components, CF(1) - the catalytic core - and CF(0) - the membrane proton channel. CF(1) has five subunits: alpha(3), beta(3), gamma(1), delta(1), epsilon(1). CF(0) has three main subunits: a, b and c.

The protein localises to the cell membrane. In terms of biological role, produces ATP from ADP in the presence of a proton gradient across the membrane. The protein is ATP synthase epsilon chain of Rhodococcus jostii (strain RHA1).